The following is a 214-amino-acid chain: Pyrrolidone-carboxylate peptidase (214 aa).

Residues Glu-78, Cys-141, and His-165 contribute to the active site.

It belongs to the peptidase C15 family. Homotetramer.

Its subcellular location is the cytoplasm. The enzyme catalyses Release of an N-terminal pyroglutamyl group from a polypeptide, the second amino acid generally not being Pro.. Functionally, removes 5-oxoproline from various penultimate amino acid residues except L-proline. This chain is Pyrrolidone-carboxylate peptidase, found in Streptococcus pneumoniae (strain 70585).